The chain runs to 83 residues: Large ribosomal subunit protein bL27 (83 aa).

Residues 1–22 (MAHKKGQGSTRNGRDSHSKRLG) are disordered.

The protein belongs to the bacterial ribosomal protein bL27 family.

In Protochlamydia amoebophila (strain UWE25), this protein is Large ribosomal subunit protein bL27.